A 111-amino-acid chain; its full sequence is Large ribosomal subunit protein uL22 (111 aa).

This sequence belongs to the universal ribosomal protein uL22 family. As to quaternary structure, part of the 50S ribosomal subunit.

Its function is as follows. This protein binds specifically to 23S rRNA; its binding is stimulated by other ribosomal proteins, e.g. L4, L17, and L20. It is important during the early stages of 50S assembly. It makes multiple contacts with different domains of the 23S rRNA in the assembled 50S subunit and ribosome. Functionally, the globular domain of the protein is located near the polypeptide exit tunnel on the outside of the subunit, while an extended beta-hairpin is found that lines the wall of the exit tunnel in the center of the 70S ribosome. In Chlamydia pneumoniae (Chlamydophila pneumoniae), this protein is Large ribosomal subunit protein uL22.